The primary structure comprises 600 residues: MVQDSAFLAKLMKSADTFELKYDFSCELYRLSTYSAFPRGVPVSERSLARAGFYYTGANDKVKCFCCGLMLDNWKQGDSPMEKHRKLYPSCNFVQTLNPANSLEASPRPSLPSTAMSTMPLSFASSENTGYFSGSYSSFPSDPVNFRANQDCPALSTSPYHFAMNTEKARLLTYETWPLSFLSPAKLAKAGFYYIGPGDRVACFACDGKLSNWERKDDAMSEHQRHFPSCPFLKDLGQSASRYTVSNLSMQTHAARIRTFSNWPSSALVHSQELASAGFYYTGHSDDVKCFCCDGGLRCWESGDDPWVEHAKWFPRCEYLLRIKGQEFVSQVQAGYPHLLEQLLSTSDSPEDENADAAIVHFGPGESSEDVVMMSTPVVKAALEMGFSRSLVRQTVQWQILATGENYRTVSDLVIGLLDAEDEMREEQMEQAAEEEESDDLALIRKNKMVLFQHLTCVTPMLYCLLSARAITEQECNAVKQKPHTLQASTLIDTVLAKGNTAATSFRNSLREIDPALYRDIFVQQDIRSLPTDDIAALPMEEQLRKLQEERMCKVCMDREVSIVFIPCGHLVVCKDCAPSLRKCPICRGTIKGTVRTFLS.

Residues Glu27–Val94 form a BIR 1 repeat. Residue Ser138 is modified to Phosphoserine. BIR repeat units follow at residues Glu167–Leu233 and His253–Leu320. The Zn(2+) site is built by Cys290, Cys293, His310, and Cys317. Positions Glu436–Gln525 constitute a CARD domain. Residues Cys553–Arg588 form an RING-type zinc finger.

It belongs to the IAP family. In terms of assembly, interacts with PRSS25; the interaction inhibits apoptotic suppressor activity. The BIR motifs region interacts with TNF receptor associated factors 1 and 2 (TRAF1 and TRAF2) to form a heteromeric complex, which is then recruited to the tumor necrosis factor receptor 2 (TNFR2). Interaction with TRAF2 is required for ubiquitination of IKBKE, degradation of NFKBIA and activation of NF-kappa-B. Interacts with RIP1, RIP2, RIP3, RIP4 and USP19. In terms of processing, auto-ubiquitinated and degraded by the proteasome in apoptotic cells.

It is found in the cytoplasm. Its subcellular location is the nucleus. It carries out the reaction S-ubiquitinyl-[E2 ubiquitin-conjugating enzyme]-L-cysteine + [acceptor protein]-L-lysine = [E2 ubiquitin-conjugating enzyme]-L-cysteine + N(6)-ubiquitinyl-[acceptor protein]-L-lysine.. With respect to regulation, USP19 regulates the stability of BIRC3/c-IAP2 by preventing its ubiquitination. Its function is as follows. Multi-functional protein which regulates not only caspases and apoptosis, but also modulates inflammatory signaling and immunity, mitogenic kinase signaling and cell proliferation, as well as cell invasion and metastasis. Acts as an E3 ubiquitin-protein ligase regulating NF-kappa-B signaling and regulates both canonical and non-canonical NF-kappa-B signaling by acting in opposite directions: acts as a positive regulator of the canonical pathway and suppresses constitutive activation of non-canonical NF-kappa-B signaling. The target proteins for its E3 ubiquitin-protein ligase activity include: RIPK1, RIPK2, RIPK3, RIPK4, CASP3, CASP7, CASP8, IKBKE, TRAF1, and BCL10. Acts as an important regulator of innate immune signaling via regulation of Toll-like receptors (TLRs), Nodlike receptors (NLRs) and RIG-I like receptors (RLRs), collectively referred to as pattern recognition receptors (PRRs). Protects cells from spontaneous formation of the ripoptosome, a large multi-protein complex that has the capability to kill cancer cells in a caspase-dependent and caspase-independent manner. Suppresses ripoptosome formation by ubiquitinating RIPK1 and CASP8. The chain is Baculoviral IAP repeat-containing protein 3 (Birc3) from Mus musculus (Mouse).